The following is a 593-amino-acid chain: UvrABC system protein C (593 aa).

The GIY-YIG domain maps to 14–91 (DSPGCYLHKD…IQENMPKYNI (78 aa)). Residues 196-231 (NKIVNGLTEKMKSAAMTMEFERAAEYRDLIEAISLL) form the UVR domain.

Belongs to the UvrC family. Interacts with UvrB in an incision complex.

It is found in the cytoplasm. In terms of biological role, the UvrABC repair system catalyzes the recognition and processing of DNA lesions. UvrC both incises the 5' and 3' sides of the lesion. The N-terminal half is responsible for the 3' incision and the C-terminal half is responsible for the 5' incision. The chain is UvrABC system protein C from Streptococcus agalactiae serotype III (strain NEM316).